We begin with the raw amino-acid sequence, 710 residues long: Denticleless protein homolog A (710 aa).

WD repeat units lie at residues 47-89 (GMPV…MQRL), 96-135 (AHTN…LIGE), and 138-178 (GHQC…KDGF). A DDB1-binding motif motif is present at residues 168–171 (WDTR). The short motif at 197 to 204 (PSKMKKRK) is the Nuclear localization signal element. WD repeat units lie at residues 215 to 254 (DSQQ…SAYR), 270 to 309 (TRKL…TDPV), 314 to 355 (GHQN…AAPV), and 359 to 398 (GHCQ…CEDS). Residues 244–247 (WDLR) carry the DDB1-binding motif motif. 2 disordered regions span residues 428 to 534 (GKPS…VSSA) and 652 to 698 (ALGH…PGSM). The segment covering 430–450 (PSVMSSSSLTSSPTPASCAPS) has biased composition (low complexity). 2 stretches are compositionally biased toward polar residues: residues 504-516 (TPKS…TKTP) and 659-690 (SSPQ…SPVS).

It belongs to the WD repeat cdt2 family. Component of the DCX(DTL) E3 ubiquitin ligase complex, at least composed of cul4 (cul4a or cul4b), ddb1, dtl/cdt2 and rbx1.

The protein localises to the nucleus. The protein resides in the cytoplasm. It localises to the cytoskeleton. It is found in the microtubule organizing center. Its subcellular location is the centrosome. The protein localises to the chromosome. It participates in protein modification; protein ubiquitination. In terms of biological role, substrate-specific adapter of a DCX (DDB1-CUL4-X-box) E3 ubiquitin-protein ligase complex required for cell cycle control, DNA damage response and translesion DNA synthesis. The DCX(DTL) complex, also named CRL4(CDT2) complex, mediates the polyubiquitination and subsequent degradation of CDT1, CDKN1A/p21(CIP1), KMT5A and SDE2. CDT1 degradation in response to DNA damage is necessary to ensure proper cell cycle regulation of DNA replication. CDKN1A/p21(CIP1) degradation during S phase or following UV irradiation is essential to control replication licensing. KMT5A degradation is also important for a proper regulation of mechanisms such as TGF-beta signaling, cell cycle progression, DNA repair and cell migration. Most substrates require their interaction with PCNA for their polyubiquitination: substrates interact with PCNA via their PIP-box, and those containing the 'K+4' motif in the PIP box, recruit the DCX(DTL) complex, leading to their degradation. In undamaged proliferating cells, the DCX(DTL) complex also promotes the 'Lys-164' monoubiquitination of PCNA, thereby being involved in PCNA-dependent translesion DNA synthesis. May play a role in the regulation of the circadian clock. The sequence is that of Denticleless protein homolog A (dtl-a) from Xenopus laevis (African clawed frog).